A 211-amino-acid chain; its full sequence is Protein-L-isoaspartate O-methyltransferase (211 aa).

Residue S62 is part of the active site.

This sequence belongs to the methyltransferase superfamily. L-isoaspartyl/D-aspartyl protein methyltransferase family.

It localises to the cytoplasm. It carries out the reaction [protein]-L-isoaspartate + S-adenosyl-L-methionine = [protein]-L-isoaspartate alpha-methyl ester + S-adenosyl-L-homocysteine. Its function is as follows. Catalyzes the methyl esterification of L-isoaspartyl residues in peptides and proteins that result from spontaneous decomposition of normal L-aspartyl and L-asparaginyl residues. It plays a role in the repair and/or degradation of damaged proteins. The sequence is that of Protein-L-isoaspartate O-methyltransferase from Shewanella loihica (strain ATCC BAA-1088 / PV-4).